The chain runs to 355 residues: MAFSGSQAPYLSPAVPFSGTIQGGLQDGLQITVNGTVLSSSGTRFAVNFQTGFSGNDIAFHFNPRFEDGGYVVCNTRQNGSWGPEERKTHMPFQKGMPFDLCFLVQSSDFKVMVNGILFVQYFHRVPFHRVDTISVNGSVQLSYISFQNPRTVPVQPAFSTVPFSQPVCFPPRPRGRRQKPPGVWPANPAPITQTVIHTVQSAPGQMFSTPAIPPMMYPHPAYPMPFITTILGGLYPSKSILLSGTVLPSAQRFHINLCSGNHIAFHLNPRFDENAVVRNTQIDNSWGSEERSLPRKMPFVRGQSFSVWILCEAHCLKVAVDGQHLFEYYHRLRNLPTINRLEVGGDIQLTHVQT.

Galectin domains lie at 17-148 and 227-355; these read FSGT…ISFQ and FITT…HVQT. Residues asparagine 48, histidine 61, arginine 65, asparagine 75, 82 to 88, histidine 267, arginine 271, threonine 281, and 287 to 293 each bind a beta-D-galactoside; these read WGPEERK and WGSEERS.

In terms of assembly, monomer. As to expression, peripheral blood leukocytes and lymphatic tissues. Expressed in lung, liver, breast and kidney with higher levels in tumor endothelial cells than normal endothelium (at protein level). Expressed in trophoblast cells in decidua and placenta in pregnancy (at protein level). Isoform 2 is the most abundant isoform expressed in endothelial cells. Upon endothelial cell activation isoform 2 expression decreases while expression of isoform 3 and isoform 5 increases. Isoform 4 decreases in pathological pregnancy.

Its subcellular location is the cytoplasm. It is found in the nucleus. The protein resides in the secreted. Functionally, binds galactosides. Has high affinity for the Forssman pentasaccharide. Ligand for HAVCR2/TIM3. Binding to HAVCR2 induces T-helper type 1 lymphocyte (Th1) death. Also stimulates bactericidal activity in infected macrophages by causing macrophage activation and IL1B secretion which restricts intracellular bacterial growth. Ligand for P4HB; the interaction retains P4HB at the cell surface of Th2 T-helper cells, increasing disulfide reductase activity at the plasma membrane, altering the plasma membrane redox state and enhancing cell migration. Ligand for CD44; the interaction enhances binding of SMAD3 to the FOXP3 promoter, leading to up-regulation of FOXP3 expression and increased induced regulatory T (iTreg) cell stability and suppressive function. Promotes ability of mesenchymal stromal cells to suppress T-cell proliferation. Expands regulatory T-cells and induces cytotoxic T-cell apoptosis following virus infection. Activates ERK1/2 phosphorylation inducing cytokine (IL-6, IL-8, IL-12) and chemokine (CCL2) production in mast and dendritic cells. Inhibits degranulation and induces apoptosis of mast cells. Induces maturation and migration of dendritic cells. Inhibits natural killer (NK) cell function. Can transform NK cell phenotype from peripheral to decidual during pregnancy. Astrocyte derived galectin-9 enhances microglial TNF production. May play a role in thymocyte-epithelial interactions relevant to the biology of the thymus. May provide the molecular basis for urate flux across cell membranes, allowing urate that is formed during purine metabolism to efflux from cells and serving as an electrogenic transporter that plays an important role in renal and gastrointestinal urate excretion. Highly selective to the anion urate. In terms of biological role, acts as an eosinophil chemoattractant. It also inhibits angiogenesis. Suppresses IFNG production by natural killer cells. The protein is Galectin-9 (LGALS9) of Homo sapiens (Human).